Reading from the N-terminus, the 300-residue chain is MASPLSQSVFPHFPPPSPAATPPPAPTTPSTPPPHFISPPPHSVPPPSPPHSVPPPLHPVPPPSPPHPVSPPPHTVPPPSPPHPVSPPPHTVPPPSPPHPVFPPPHTVPPPSPHFVPPPPNMVPPPSPPHANPPPPPPPHSVPPPPHTVPPPPPPPHIIPPPAHALSPPPPHIIPPPPPSPSNHSTTIVVIFVSCGGVFFLAFAMAALWCFLKKKKKKMVQKAENIHFDEHRKVTERIEQGPHGTETAILSVEDDIHIEEDIKKSELENFRKGLHLNYGNTYNIDTGKPSSSFGHHYLHG.

Positions 1 to 181 (MASPLSQSVF…HIIPPPPPSP (181 aa)) are disordered. Residues 1–187 (MASPLSQSVF…PPSPSNHSTT (187 aa)) lie on the Extracellular side of the membrane. Positions 12 to 181 (HFPPPSPAAT…HIIPPPPPSP (170 aa)) are enriched in pro residues. Asn-183 carries an N-linked (GlcNAc...) asparagine glycan. Residues 188–208 (IVVIFVSCGGVFFLAFAMAAL) form a helical membrane-spanning segment. At 209 to 300 (WCFLKKKKKK…SSFGHHYLHG (92 aa)) the chain is on the cytoplasmic side.

Accumulates in cells differentiating into tracheary element (TE) which undergo secondary cell wall (SCW) formation.

It is found in the cell membrane. Its subcellular location is the secreted. The protein localises to the cell wall. Functionally, involved in the secondary cell wall (SCW) formation of vessel elements (e.g. protoxylem and metaxylem), thus promoting tracheary element (TE) differentiation. The protein is Protein TRACHEARY ELEMENT DIFFERENTIATION-RELATED 7A of Zinnia elegans (Garden zinnia).